Reading from the N-terminus, the 436-residue chain is Zinc finger protein 101 (436 aa).

One can recognise a KRAB domain in the interval 4 to 82 (VAFEDVAVNF…RKEGNEHRET (79 aa)). The C2H2-type 1 zinc finger occupies 102–124 (CKCSVCGKVFLRHSFLDRHMRAH). Residues 128–141 (KRSECGGEWRETPR) are compositionally biased toward basic and acidic residues. The segment at 128 to 164 (KRSECGGEWRETPRKQKQHGKASISPSSGARRTVTPT) is disordered. The span at 151-163 (ISPSSGARRTVTP) shows a compositional bias: polar residues. A C2H2-type 2 zinc finger spans residues 169 to 191 (YECKVCGKAFNSPNLFQIHQRTH). The C2H2-type 3; degenerate zinc finger occupies 197 to 219 (YKCREIVRAFTVSSFFRKHGKMH). C2H2-type zinc fingers lie at residues 225-247 (YECKYCGKPIDYPSLFQIHVRTH), 253-276 (YKCKQCGKAFISAGYLRTHEIRSH), 282-304 (HQCQECGKKLSCSSSLHRHERTH), 310-332 (YECQKCAKVFRCPTSLQAHERAH), 338-360 (YECNKCGKTFNYPSCFRRHKKTH), 366-388 (YECTRCGKAFGWCSSLRRHEMTH), and 394-416 (FDCKQCGKVFTFSNYLRLHERTH).

Belongs to the krueppel C2H2-type zinc-finger protein family. As to expression, expressed in a variety of adult and fetal tissues.

Its subcellular location is the nucleus. May be involved in transcriptional regulation. In Homo sapiens (Human), this protein is Zinc finger protein 101 (ZNF101).